Consider the following 250-residue polypeptide: Probable transcriptional regulatory protein Mkms_2298 (250 aa).

Belongs to the TACO1 family.

It localises to the cytoplasm. In Mycobacterium sp. (strain KMS), this protein is Probable transcriptional regulatory protein Mkms_2298.